The primary structure comprises 1197 residues: Transient receptor potential cation channel subfamily A member 1 (1197 aa).

Over 1-753 the chain is Cytoplasmic; that stretch reads MTSGDKETPK…KWNSYGKYFH (753 aa). 14 ANK repeats span residues 89-118, 122-151, 155-184, 190-219, 224-253, 265-294, 298-327, 336-365, 369-398, 443-472, 476-505, 512-541, 544-574, and 578-607; these read KGRT…DFNA, AGNT…DTGV, KKQA…VIDI, HGRT…ACPR, NGYY…QRGC, EGNV…KIST, DLST…MEKR, QKMT…DINA, EHRS…CISV, MGCS…CINL, NNES…GSFI, AGMT…LLHR, TGRN…LLDQ, and DGNT…KLVY. A helical transmembrane segment spans residues 754-774; that stretch reads LANLLIYSIFLVFVTIYSSLM. At 775-827 the chain is on the extracellular side; it reads MNNIELKAGDNKTMSQYCNMGWEQLTMNLSQNPSVASQIRLDSCEERINRTTA. N-linked (GlcNAc...) asparagine glycans are attached at residues Asn-785, Asn-802, and Asn-823. A helical transmembrane segment spans residues 828–848; it reads ILFCAVVIVVYILLNSMRELI. Topologically, residues 849–856 are cytoplasmic; sequence QIYQQKLH. The chain crosses the membrane as a helical span at residues 857–877; it reads YILETVNLISWVLYISALVMV. At 878 to 889 the chain is on the extracellular side; the sequence is TPAFQPDGGINT. The helical transmembrane segment at 890–910 threads the bilayer; it reads IHYSAASIAVFLSWFRLLLFL. Residues 911 to 932 are Cytoplasmic-facing; the sequence is QRFDQVGIYVVMFLEILQTLIK. A helical membrane pass occupies residues 933 to 953; sequence VLMVFSILIIAFGLAFYILLS. The Extracellular portion of the chain corresponds to 954-968; the sequence is KIIDPQPNHLSFSNI. Positions 969 to 989 form an intramembrane region, pore-forming; that stretch reads PMSLLRTFSMMLGELDFVGTY. The Extracellular portion of the chain corresponds to 990 to 1004; the sequence is VNTYYRDQLKVPMTS. A helical membrane pass occupies residues 1005 to 1025; it reads FLILSVFMILMPILLMNLLIG. At 1026 to 1197 the chain is on the cytoplasmic side; that stretch reads LAVGDIESVR…RAALSFNKSM (172 aa).

It belongs to the transient receptor (TC 1.A.4) family. In terms of assembly, homotetramer.

The protein resides in the cell membrane. In terms of biological role, essential for thermotaxis by sensing environmental temperature. Receptor-activated non-selective cation channel involved in detection of sensations such as temperature. Involved in heat nociception by being activated by warm temperature of about 24-29 degrees Celsius. This is Transient receptor potential cation channel subfamily A member 1 (TrpA1) from Drosophila melanogaster (Fruit fly).